The primary structure comprises 227 residues: DNA repair protein RecO (227 aa).

Belongs to the RecO family.

Its function is as follows. Involved in DNA repair and RecF pathway recombination. The sequence is that of DNA repair protein RecO from Pseudomonas syringae pv. syringae (strain B728a).